We begin with the raw amino-acid sequence, 948 residues long: UvrABC system protein A (948 aa).

An ATP-binding site is contributed by 33–40 (GLSGSGKS). The C4-type zinc finger occupies 252–279 (CPICGFSIGELEPRMFSFNSPFGACPTC). 2 consecutive ABC transporter domains span residues 309–587 (WIPT…KKSL) and 607–935 (ASDR…KYLK). 639–646 (GVSGSGKS) serves as a coordination point for ATP. Residues 738–764 (CEACKGDGIIKIEMHFLPDVYVPCEVC) form a C4-type zinc finger.

This sequence belongs to the ABC transporter superfamily. UvrA family. As to quaternary structure, forms a heterotetramer with UvrB during the search for lesions.

Its subcellular location is the cytoplasm. In terms of biological role, the UvrABC repair system catalyzes the recognition and processing of DNA lesions. UvrA is an ATPase and a DNA-binding protein. A damage recognition complex composed of 2 UvrA and 2 UvrB subunits scans DNA for abnormalities. When the presence of a lesion has been verified by UvrB, the UvrA molecules dissociate. The sequence is that of UvrABC system protein A from Staphylococcus aureus (strain MRSA252).